Here is a 427-residue protein sequence, read N- to C-terminus: Terminal nucleotidyltransferase 5B (427 aa).

The interval 1–49 (MMPSESGAESLEQPAAQVGTGAASAVATAGAAGGGPDPEASSASLGRHQ) is disordered. Over residues 15 to 30 (AAQVGTGAASAVATAG) the composition is skewed to low complexity.

Belongs to the TENT family.

The protein resides in the cytoplasm. Its subcellular location is the nucleus. The enzyme catalyses RNA(n) + ATP = RNA(n)-3'-adenine ribonucleotide + diphosphate. Functionally, catalyzes the transfer of one adenosine molecule from an ATP to an mRNA poly(A) tail bearing a 3'-OH terminal group in an ATP hydrolysis-dependent manner. May be involved in maintaining the translation efficiency of at least some genes through preventing degradation of their mRNAs. Prefers RNA molecules that are adenosine-rich close to 3'-end. In addition, may inhibit cell proliferation and cell cycle progression through ubiquitination of beta-catenin/CTNNB1. The protein is Terminal nucleotidyltransferase 5B of Mus musculus (Mouse).